The sequence spans 64 residues: Conotoxin reg3.16 (64 aa).

The signal sequence occupies residues 1 to 19; that stretch reads MSKLGVFLTICLLLFPLTA. The propeptide occupies 20–49; the sequence is LQLDGDQPADKPAQRKLKILPKRKHWTRFT. Disulfide bonds link C50–C64, C51–C60, and C56–C63.

This sequence belongs to the conotoxin M superfamily. As to expression, expressed by the venom duct.

The protein resides in the secreted. The chain is Conotoxin reg3.16 from Conus regius (Crown cone).